The following is a 79-amino-acid chain: MISLLQVRDAVALNGRADAKLLSHQLSASLSMVEAMLEQLTVMGKLEKLNATACLSGSCKQCPEVQQCDTVVYRIAGGY.

The iron-sulfur cluster site is built by Cys-54, Cys-59, Cys-62, and Cys-68.

The protein belongs to the FeoC family.

Functionally, may function as a transcriptional regulator that controls feoABC expression. The polypeptide is Probable [Fe-S]-dependent transcriptional repressor (Photorhabdus laumondii subsp. laumondii (strain DSM 15139 / CIP 105565 / TT01) (Photorhabdus luminescens subsp. laumondii)).